A 357-amino-acid chain; its full sequence is uncharacterized protein (357 aa).

The 170-residue stretch at 27 to 196 (LVCEGGGQRG…SDAIPVKEAA (170 aa)) folds into the PNPLA domain. The short motif at 31–36 (GGGQRG) is the GXGXXG element. The short motif at 59–63 (GTSAG) is the GXSXG element. Residue Ser61 is the Nucleophile of the active site. The Proton acceptor role is filled by Asp183. The DGA/G motif lies at 183 to 185 (DGG).

Probable lipid hydrolase. This is an uncharacterized protein from Escherichia coli (strain K12).